The primary structure comprises 304 residues: Tyrosine recombinase XerD (304 aa).

Residues 6–91 form the Core-binding (CB) domain; sequence EPWRKTLETF…AIRSFHKFLL (86 aa). One can recognise a Tyr recombinase domain in the interval 112–298; the sequence is YLPSVLTIEE…DRSFIKEVHK (187 aa). Active-site residues include arginine 155, lysine 179, histidine 250, arginine 253, and histidine 276. Tyrosine 285 functions as the O-(3'-phospho-DNA)-tyrosine intermediate in the catalytic mechanism.

This sequence belongs to the 'phage' integrase family. XerD subfamily. As to quaternary structure, forms a cyclic heterotetrameric complex composed of two molecules of XerC and two molecules of XerD.

Its subcellular location is the cytoplasm. Functionally, site-specific tyrosine recombinase, which acts by catalyzing the cutting and rejoining of the recombining DNA molecules. The XerC-XerD complex is essential to convert dimers of the bacterial chromosome into monomers to permit their segregation at cell division. It also contributes to the segregational stability of plasmids. This Chlorobaculum tepidum (strain ATCC 49652 / DSM 12025 / NBRC 103806 / TLS) (Chlorobium tepidum) protein is Tyrosine recombinase XerD.